The sequence spans 900 residues: uncharacterized protein (900 aa).

Residues 1–16 are compositionally biased toward basic and acidic residues; sequence MGSNKEAKNIDSKNDR. Disordered stretches follow at residues 1-84, 103-160, 512-556, 568-613, and 648-676; these read MGSN…KLSS, NSSR…PDPS, NFNQ…KKSG, LAST…KSAN, and KRSS…NSFP. Residues 17-27 are compositionally biased toward polar residues; it reads GLTSITSNKIS. Over residues 30–58 the composition is skewed to basic and acidic residues; it reads KAHDNHTSSMITEHKNADKEKGKQEKESR. 2 stretches are compositionally biased toward low complexity: residues 63–76 and 103–127; these read QSSS…PQVS and NSSR…QLSK. A Phosphoserine modification is found at serine 105. Basic residues predominate over residues 129 to 143; that stretch reads GLHHHHTSNNKHSHR. Over residues 528–537 the composition is skewed to low complexity; sequence SSRSLSLPSS. Over residues 543-553 the composition is skewed to basic residues; that stretch reads KRKKSPTKATK. Composition is skewed to low complexity over residues 570–601 and 665–676; these read STSH…SSPP and SPISSNSDNSFP.

This is an uncharacterized protein from Saccharomyces cerevisiae (strain ATCC 204508 / S288c) (Baker's yeast).